We begin with the raw amino-acid sequence, 398 residues long: Large ribosomal subunit protein uL3 (398 aa).

Basic and acidic residues predominate over residues 1 to 10 (MSHRKFEAPR). The segment at 1 to 34 (MSHRKFEAPRHGNLGFRPRKRAARHQGKVKSFPK) is disordered. Over residues 17–28 (RPRKRAARHQGK) the composition is skewed to basic residues.

The protein belongs to the universal ribosomal protein uL3 family.

The protein localises to the cytoplasm. Functionally, the L3 protein is a component of the large subunit of cytoplasmic ribosomes. The protein is Large ribosomal subunit protein uL3 (rpl3) of Dictyostelium discoideum (Social amoeba).